The chain runs to 132 residues: Fertilization-influencing membrane protein (132 aa).

Residues 100–120 (PGLFHHILVGLLVVAFFFLLF) form a helical membrane-spanning segment.

Testis-specific.

The protein localises to the cell membrane. Functionally, may play a role in sperm-oocyte fusion during fertilization. This Homo sapiens (Human) protein is Fertilization-influencing membrane protein.